A 152-amino-acid chain; its full sequence is UPF0266 membrane protein YobD (152 aa).

The next 3 membrane-spanning stretches (helical) occupy residues 6–26 (LVLILFIAALLAYALYDQFIM), 45–65 (VDSVIFVGLVAILIYNNVTSH), and 67–87 (AQMTTWLLSALALMGFYIFWI).

The protein belongs to the UPF0266 family.

It localises to the cell inner membrane. The sequence is that of UPF0266 membrane protein YobD from Salmonella choleraesuis (strain SC-B67).